The sequence spans 447 residues: Serine/threonine-protein phosphatase 2A 55 kDa regulatory subunit B gamma isoform (447 aa).

WD repeat units lie at residues 22–61 (TPAD…KNAP), 87–128 (EIEE…KRPE), 171–209 (GHTY…RSFN), 220–260 (DLTE…LCDK), 279–317 (EIIS…RPIE), 334–375 (ENDC…DVTL), and 410–446 (DFTK…NSDM).

The protein belongs to the phosphatase 2A regulatory subunit B family. In terms of assembly, PP2A consists of a common heterodimeric core enzyme, composed of a 36 kDa catalytic subunit (subunit C) and a 65 kDa constant regulatory subunit (PR65 or subunit A), that associates with a variety of regulatory subunits. Proteins that associate with the core dimer include three families of regulatory subunits B (the R2/B/PR55/B55, R3/B''/PR72/PR130/PR59 and R5/B'/B56 families), the 48 kDa variable regulatory subunit, viral proteins, and cell signaling molecules. Interacts with IER5.

In terms of biological role, the B regulatory subunit might modulate substrate selectivity and catalytic activity, and might also direct the localization of the catalytic enzyme to a particular subcellular compartment. The sequence is that of Serine/threonine-protein phosphatase 2A 55 kDa regulatory subunit B gamma isoform (PPP2R2C) from Macaca fascicularis (Crab-eating macaque).